Reading from the N-terminus, the 312-residue chain is Zinc-finger homeodomain protein 4 (312 aa).

The interval 20 to 74 (GGGGSHGHMIHHHDHHAANSAPPTHNNNNTTQPPPMPLHGNGHGNNYDHHHHQDP) is disordered. The span at 37–50 (ANSAPPTHNNNNTT) shows a compositional bias: low complexity. The segment at 90–139 (YKECLKNHAAAMGGNATDGCGEFMPSGEDGSIEALTCSACNCHRNFHRKE) adopts a ZF-HD dimerization-type; degenerate zinc-finger fold. Residues 218–281 (KKRFRTKFTP…NNKIHFSKKN (64 aa)) constitute a DNA-binding region (homeobox).

In terms of assembly, homo- and heterodimer with other ZFHD proteins. Interacts with ZHD1, ZHD2, ZHD5, ZHD7, ZHD8, ZHD10 and ZHD11. Mostly expressed in flowers and inflorescence.

The protein localises to the nucleus. Its function is as follows. Putative transcription factor. Probably involved in the regulation of floral induction. The chain is Zinc-finger homeodomain protein 4 (ZHD4) from Arabidopsis thaliana (Mouse-ear cress).